Reading from the N-terminus, the 168-residue chain is ATP synthase F(1) complex subunit delta, mitochondrial (168 aa).

A mitochondrion-targeting transit peptide spans 1–22 (MLPSALLRRPGLGRLVRQVRLY). N6-acetyllysine; alternate is present on residues Lys-136 and Lys-165. N6-succinyllysine; alternate is present on residues Lys-136 and Lys-165.

It belongs to the ATPase epsilon chain family. As to quaternary structure, component of the ATP synthase complex composed at least of ATP5F1A/subunit alpha, ATP5F1B/subunit beta, ATP5MC1/subunit c (homooctomer), MT-ATP6/subunit a, MT-ATP8/subunit 8, ATP5ME/subunit e, ATP5MF/subunit f, ATP5MG/subunit g, ATP5MK/subunit k, ATP5MJ/subunit j, ATP5F1C/subunit gamma, ATP5F1D/subunit delta, ATP5F1E/subunit epsilon, ATP5PF/subunit F6, ATP5PB/subunit b, ATP5PD/subunit d, ATP5PO/subunit OSCP. ATP synthase complex consists of a soluble F(1) head domain (subunits alpha(3) and beta(3)) - the catalytic core - and a membrane F(0) domain - the membrane proton channel (subunits c, a, 8, e, f, g, k and j). These two domains are linked by a central stalk (subunits gamma, delta, and epsilon) rotating inside the F1 region and a stationary peripheral stalk (subunits F6, b, d, and OSCP). Component of a complex composed at least by ATPIF1, ATP5F1A, ATP5F1B, ATP5F1C AND ATP5F1E.

It is found in the mitochondrion. Its subcellular location is the mitochondrion inner membrane. Functionally, subunit delta, of the mitochondrial membrane ATP synthase complex (F(1)F(0) ATP synthase or Complex V) that produces ATP from ADP in the presence of a proton gradient across the membrane which is generated by electron transport complexes of the respiratory chain. ATP synthase complex consist of a soluble F(1) head domain - the catalytic core - and a membrane F(1) domain - the membrane proton channel. These two domains are linked by a central stalk rotating inside the F(1) region and a stationary peripheral stalk. During catalysis, ATP synthesis in the catalytic domain of F(1) is coupled via a rotary mechanism of the central stalk subunits to proton translocation. In vivo, can only synthesize ATP although its ATP hydrolase activity can be activated artificially in vitro. With the central stalk subunit gamma, is essential for the biogenesis of F(1) catalytic part of the ATP synthase complex namely in the formation of F1 assembly intermediate. This chain is ATP synthase F(1) complex subunit delta, mitochondrial, found in Bos taurus (Bovine).